We begin with the raw amino-acid sequence, 501 residues long: ADP,ATP carrier protein 3 (501 aa).

12 helical membrane-spanning segments follow: residues 23–43, 59–79, 90–110, 146–166, 183–203, 227–247, 293–313, 326–346, 361–381, 383–403, 446–466, and 470–490; these read LKLF…FGAL, IISL…TVLY, YIFY…AYII, YALM…LMFW, PVLG…LVFF, IMLQ…MLLF, IALL…PWKA, FNFM…FMVI, LLTP…IIFI, EIGA…VGAI, FGKS…PTAT, and IIIY…WNVI.

Belongs to the ADP/ATP translocase tlc family.

The protein resides in the cell membrane. Functionally, provides the rickettsial cell with host ATP in exchange for rickettsial ADP. This is an obligate exchange system. This energy acquiring activity is an important component of rickettsial parasitism. This Rickettsia felis (strain ATCC VR-1525 / URRWXCal2) (Rickettsia azadi) protein is ADP,ATP carrier protein 3 (tlcC).